Reading from the N-terminus, the 284-residue chain is 4-diphosphocytidyl-2-C-methyl-D-erythritol kinase (284 aa).

Residue Lys14 is part of the active site. 98–108 (PMGGGLGGGSS) contributes to the ATP binding site. Asp140 is an active-site residue.

It belongs to the GHMP kinase family. IspE subfamily.

The catalysed reaction is 4-CDP-2-C-methyl-D-erythritol + ATP = 4-CDP-2-C-methyl-D-erythritol 2-phosphate + ADP + H(+). It functions in the pathway isoprenoid biosynthesis; isopentenyl diphosphate biosynthesis via DXP pathway; isopentenyl diphosphate from 1-deoxy-D-xylulose 5-phosphate: step 3/6. In terms of biological role, catalyzes the phosphorylation of the position 2 hydroxy group of 4-diphosphocytidyl-2C-methyl-D-erythritol. The sequence is that of 4-diphosphocytidyl-2-C-methyl-D-erythritol kinase from Shewanella baltica (strain OS195).